Here is a 476-residue protein sequence, read N- to C-terminus: Bifunctional protein GlmU (476 aa).

A pyrophosphorylase region spans residues 1-235 (MTALDIIIMA…ALQVAGVNSP (235 aa)). Residues K23, Q81, 86–87 (GT), 108–110 (SGD), G145, E160, and N233 contribute to the UDP-N-acetyl-alpha-D-glucosamine site. Mg(2+) is bound at residue D110. N233 contacts Mg(2+). The tract at residues 236-256 (AQLAELERAHQRAQAAALMEQ) is linker. An N-acetyltransferase region spans residues 257 to 476 (GVRLADPARF…WKRPAKQAKG (220 aa)). Residues R351 and K369 each coordinate UDP-N-acetyl-alpha-D-glucosamine. The Proton acceptor role is filled by H381. Positions 384 and 395 each coordinate UDP-N-acetyl-alpha-D-glucosamine. Residues A398, 404 to 405 (NY), S423, G441, and R458 each bind acetyl-CoA.

In the N-terminal section; belongs to the N-acetylglucosamine-1-phosphate uridyltransferase family. It in the C-terminal section; belongs to the transferase hexapeptide repeat family. In terms of assembly, homotrimer. The cofactor is Mg(2+).

The protein resides in the cytoplasm. The enzyme catalyses alpha-D-glucosamine 1-phosphate + acetyl-CoA = N-acetyl-alpha-D-glucosamine 1-phosphate + CoA + H(+). The catalysed reaction is N-acetyl-alpha-D-glucosamine 1-phosphate + UTP + H(+) = UDP-N-acetyl-alpha-D-glucosamine + diphosphate. Its pathway is nucleotide-sugar biosynthesis; UDP-N-acetyl-alpha-D-glucosamine biosynthesis; N-acetyl-alpha-D-glucosamine 1-phosphate from alpha-D-glucosamine 6-phosphate (route II): step 2/2. The protein operates within nucleotide-sugar biosynthesis; UDP-N-acetyl-alpha-D-glucosamine biosynthesis; UDP-N-acetyl-alpha-D-glucosamine from N-acetyl-alpha-D-glucosamine 1-phosphate: step 1/1. It participates in bacterial outer membrane biogenesis; LPS lipid A biosynthesis. Functionally, catalyzes the last two sequential reactions in the de novo biosynthetic pathway for UDP-N-acetylglucosamine (UDP-GlcNAc). The C-terminal domain catalyzes the transfer of acetyl group from acetyl coenzyme A to glucosamine-1-phosphate (GlcN-1-P) to produce N-acetylglucosamine-1-phosphate (GlcNAc-1-P), which is converted into UDP-GlcNAc by the transfer of uridine 5-monophosphate (from uridine 5-triphosphate), a reaction catalyzed by the N-terminal domain. In Acidovorax ebreus (strain TPSY) (Diaphorobacter sp. (strain TPSY)), this protein is Bifunctional protein GlmU.